The chain runs to 483 residues: AP-3 complex subunit mu (483 aa).

Residues 211-482 form the MHD domain; it reads NNELYVDLLE…KTQTGNFQVR (272 aa).

This sequence belongs to the adaptor complexes medium subunit family. Adaptor protein complex 3 (AP-3) is a heterotetramer composed of 2 large adaptins (APL5 and APL6), a medium adaptin (APM3) and a small adaptin (APS3).

The protein localises to the golgi apparatus. It is found in the cytoplasmic vesicle membrane. Functionally, part of the AP-3 complex, an adaptor-related complex which is not clathrin-associated. The complex is associated with the Golgi region as well as more peripheral structures. It facilitates the budding of vesicles from the Golgi membrane and may be directly involved in trafficking to the vacuole. Required for the transport via the ALP pathway, which directs the transport of the cargo proteins PHO8 and VAM3 to the vacuole. The sequence is that of AP-3 complex subunit mu (APM3) from Saccharomyces cerevisiae (strain ATCC 204508 / S288c) (Baker's yeast).